A 201-amino-acid chain; its full sequence is Peptidyl-tRNA hydrolase (201 aa).

Residue Y14 participates in tRNA binding. H19 functions as the Proton acceptor in the catalytic mechanism. 3 residues coordinate tRNA: Y64, N66, and N112.

The protein belongs to the PTH family. Monomer.

Its subcellular location is the cytoplasm. It carries out the reaction an N-acyl-L-alpha-aminoacyl-tRNA + H2O = an N-acyl-L-amino acid + a tRNA + H(+). In terms of biological role, hydrolyzes ribosome-free peptidyl-tRNAs (with 1 or more amino acids incorporated), which drop off the ribosome during protein synthesis, or as a result of ribosome stalling. Its function is as follows. Catalyzes the release of premature peptidyl moieties from peptidyl-tRNA molecules trapped in stalled 50S ribosomal subunits, and thus maintains levels of free tRNAs and 50S ribosomes. The protein is Peptidyl-tRNA hydrolase of Bradyrhizobium sp. (strain ORS 278).